The primary structure comprises 388 residues: Lipid-A-disaccharide synthase (388 aa).

Belongs to the LpxB family.

It carries out the reaction a lipid X + a UDP-2-N,3-O-bis[(3R)-3-hydroxyacyl]-alpha-D-glucosamine = a lipid A disaccharide + UDP + H(+). It functions in the pathway bacterial outer membrane biogenesis; LPS lipid A biosynthesis. Condensation of UDP-2,3-diacylglucosamine and 2,3-diacylglucosamine-1-phosphate to form lipid A disaccharide, a precursor of lipid A, a phosphorylated glycolipid that anchors the lipopolysaccharide to the outer membrane of the cell. In Burkholderia mallei (strain NCTC 10247), this protein is Lipid-A-disaccharide synthase.